The following is a 616-amino-acid chain: Probable Xaa-Pro aminopeptidase P (616 aa).

4 residues coordinate Mn(2+): aspartate 413, aspartate 424, glutamate 522, and glutamate 536.

This sequence belongs to the peptidase M24B family. Mn(2+) serves as cofactor.

It carries out the reaction Release of any N-terminal amino acid, including proline, that is linked to proline, even from a dipeptide or tripeptide.. In terms of biological role, catalyzes the removal of a penultimate prolyl residue from the N-termini of peptides. The sequence is that of Probable Xaa-Pro aminopeptidase P (AMPP) from Paracoccidioides brasiliensis (strain Pb18).